A 336-amino-acid polypeptide reads, in one-letter code: MYTVLTGTPPFMASPLSEMYQNIREGHYPEPAHLSANARRLIVHLLAPNPAERPSLDHLLQDDFFTQGFTPDRLPAHSCHSPPIFAIPPPLGRIFRKVGQRLLTQCRPPCPFTPKEASGPGEGGPDPDSMEWDGESSLSAKEVPCLEGPIHLVAQGTLQSDLAGPEGSRRPEVEAALRHLQLCLDVGPPATQDPLGEQQPILWAPKWVDYSSKYGFGYQLLDGGRTGRHPHGPATPRREGTLPTPVPPAGPGLCLLRFLASEHALLLLFSNGMVQVSFSGVPAQLVLSGEGEGLQLTLWEQGSPGTSYSLDVPRSHGCAPTTGQHLHHALRMLQSI.

One can recognise a Protein kinase; truncated domain in the interval 1 to 65 (MYTVLTGTPP…LDHLLQDDFF (65 aa)). Disordered stretches follow at residues 109–135 (PCPF…WDGE) and 224–245 (GRTG…LPTP). One can recognise a POLO box domain in the interval 255–336 (LLRFLASEHA…HHALRMLQSI (82 aa)).

The protein belongs to the protein kinase superfamily. Ser/Thr protein kinase family. CDC5/Polo subfamily. As to expression, expressed in the brain, neurons and glial cells. Also expressed in highly differentiated cells, such as the serous acini in the parotid gland, distal and proximal tubules of the kidney, tubules of the seminal gland, Kupffer cells and some hepatocytes in the liver, and some cells in the germinal center of lymph nodes (at protein level).

It is found in the nucleus. Its subcellular location is the nucleolus. The protein localises to the cytoplasm. Its function is as follows. Inactive serine/threonine-protein kinase that plays a role in cell cycle progression and neuronal differentiation. The polypeptide is Inactive serine/threonine-protein kinase PLK5 (PLK5) (Homo sapiens (Human)).